The primary structure comprises 413 residues: Cell wall mannoprotein HSP150 (413 aa).

The signal sequence occupies residues 1–18 (MQYKKTLVASALAATTLA). A propeptide spanning residues 19 to 72 (AYAPSEPWSTLTPTATYSGGVTDYASTFGIAVQPISTTSSASSAATTASSKAKR) is cleaved from the precursor. PIR1/2/3 repeat units follow at residues 73 to 89 (AASQIGDGQVQAATTTA), 97 to 115 (AAAVSQIGDGQIQATTKTT), 116 to 134 (AAAVSQIGDGQIQATTKTT), 140 to 158 (AAAVSQISDGQIQATTTTL), 164 to 182 (AAAVSQIGDGQVQATTTTL), 188 to 206 (AAAVSQIGDGQVQATTKTT), 207 to 225 (AAAVSQIGDGQVQATTKTT), 226 to 244 (AAAVSQIGDGQVQATTKTT), 245 to 263 (AAAVSQIGDGQVQATTKTT), 264 to 282 (AAAVSQITDGQVQATTKTT), and 283 to 300 (QAASQVSDGQVQATTATS).

The protein belongs to the PIR protein family. In terms of processing, covalently linked to beta-1,3-glucan of the inner cell wall layer via an alkali-sensitive ester linkage between the gamma-carboxyl group of glutamic acids, arising from specific glutamines within the PIR1/2/3 repeats, and hydroxyl groups of glucoses of beta-1,3-glucan chains. The propeptide is cleaved off in the late Golgi. While both peptides are secreted, only a fraction of the mature glycoprotein is incorporated into the cell wall. Post-translationally, O-glycosylated. Extensively O-mannosylated.

The protein localises to the secreted. Its subcellular location is the cell wall. Functionally, component of the outer cell wall layer. Required for stability of the cell wall and for optimal growth. Required for resistance against several antifungal and cell wall-perturbing agents and for tolerance to heat shock. The polypeptide is Cell wall mannoprotein HSP150 (HSP150) (Saccharomyces cerevisiae (strain ATCC 204508 / S288c) (Baker's yeast)).